A 179-amino-acid chain; its full sequence is Large ribosomal subunit protein uL5 (179 aa).

Belongs to the universal ribosomal protein uL5 family. As to quaternary structure, part of the 50S ribosomal subunit; part of the 5S rRNA/L5/L18/L25 subcomplex. Contacts the 5S rRNA and the P site tRNA. Forms a bridge to the 30S subunit in the 70S ribosome.

Its function is as follows. This is one of the proteins that bind and probably mediate the attachment of the 5S RNA into the large ribosomal subunit, where it forms part of the central protuberance. In the 70S ribosome it contacts protein S13 of the 30S subunit (bridge B1b), connecting the 2 subunits; this bridge is implicated in subunit movement. Contacts the P site tRNA; the 5S rRNA and some of its associated proteins might help stabilize positioning of ribosome-bound tRNAs. The sequence is that of Large ribosomal subunit protein uL5 from Bordetella bronchiseptica (strain ATCC BAA-588 / NCTC 13252 / RB50) (Alcaligenes bronchisepticus).